The sequence spans 119 residues: Protein MRP-126 (119 aa).

2 consecutive EF-hand domains span residues 23-58 (DVFH…LKHV) and 59-94 (KNQV…VTVA). Positions 37, 42, 72, 74, 76, 78, and 83 each coordinate Ca(2+).

This sequence belongs to the S-100 family. As to expression, expressed in v-myb-transformed myelomonocytic cells.

The polypeptide is Protein MRP-126 (Gallus gallus (Chicken)).